Reading from the N-terminus, the 283-residue chain is Pantothenate synthetase (283 aa).

31–38 contacts ATP; sequence MGALHEGH. The active-site Proton donor is H38. Q62 lines the (R)-pantoate pocket. Q62 is a binding site for beta-alanine. 148–151 is a binding site for ATP; the sequence is GKKD. Q154 contributes to the (R)-pantoate binding site. Residues V177 and 185–188 contribute to the ATP site; that span reads RSSR.

This sequence belongs to the pantothenate synthetase family. Homodimer.

It is found in the cytoplasm. The catalysed reaction is (R)-pantoate + beta-alanine + ATP = (R)-pantothenate + AMP + diphosphate + H(+). It functions in the pathway cofactor biosynthesis; (R)-pantothenate biosynthesis; (R)-pantothenate from (R)-pantoate and beta-alanine: step 1/1. Functionally, catalyzes the condensation of pantoate with beta-alanine in an ATP-dependent reaction via a pantoyl-adenylate intermediate. In Staphylococcus haemolyticus (strain JCSC1435), this protein is Pantothenate synthetase.